The primary structure comprises 293 residues: MDSIDTKRLNDSNASDRALSGCAVLFLGCSSLEHNFLSLYKDERGKFSVFKVIKLTLSDSVGGLEGYEILKLHDADPYLGVELKFMAMPPCQRFLESYACGSLTQFLSQHASRLLALPDGVEIETQLKAGVHTLDHSLQDIEICLDHIRQSQPVRLRDDEVTQLEQQLQNSYGPPSQPPQELPRNCFLFQKRVFDDRPLTPADQQRFAAHVGRDWKRVGRALQKNCRALKGPAIDNLAYEYEREGLYEQAYQLLGRFIQSEGRSAKLSRLISALEETKMTSMAEIMLGIQPRD.

The short motif at 156–171 (LRDDEVTQLEQQLQNS) is the Nuclear export signal element. The 91-residue stretch at 200–290 (TPADQQRFAA…SMAEIMLGIQ (91 aa)) folds into the Death domain. Positions 216–229 (KRVGRALQKNCRAL) match the Nuclear localization signal motif.

Heterodimer with tnfrsf1a.

The protein localises to the nucleus. Its subcellular location is the cytoplasm. It is found in the cytoskeleton. In terms of biological role, adapter molecule for tnfrsf1a that specifically associates with the cytoplasmic domain of activated tnfrsf1a mediating its interaction with fadd. The protein is Tumor necrosis factor receptor type 1-associated DEATH domain protein of Danio rerio (Zebrafish).